The sequence spans 280 residues: MTARIDAAFARCRAEGRAALVTYVMAGDPDPETSLKVLEALPKAGADIVEFGLPFTDPMADGPAIQAAGLRALKAGQDLRGTLALVRRFREGDDRTPVVLMGYYNPIHTYGVPHFLEDAQAAGIDGLIVVDLPPEEDEELCLPALEKGLAFIRLATPTTDEARLPAVLANTAGFVYYVSITGVTGTATPDFGRVSQAVSRITAHTNLPVVVGFGVKTGAHAAEIARGADGVVVGSALVDALARSLEPGDRAGSGTVEAVTSLVRELAQGVRSTAKAPAGA.

Active-site proton acceptor residues include Glu-50 and Asp-61.

This sequence belongs to the TrpA family. Tetramer of two alpha and two beta chains.

It carries out the reaction (1S,2R)-1-C-(indol-3-yl)glycerol 3-phosphate + L-serine = D-glyceraldehyde 3-phosphate + L-tryptophan + H2O. Its pathway is amino-acid biosynthesis; L-tryptophan biosynthesis; L-tryptophan from chorismate: step 5/5. Functionally, the alpha subunit is responsible for the aldol cleavage of indoleglycerol phosphate to indole and glyceraldehyde 3-phosphate. This Methylorubrum extorquens (strain PA1) (Methylobacterium extorquens) protein is Tryptophan synthase alpha chain.